The primary structure comprises 1004 residues: Translation initiation factor IF-2 (1004 aa).

Positions 36 to 393 (SSTIEPPVVK…RQKRNEYESM (358 aa)) are disordered. 2 stretches are compositionally biased toward low complexity: residues 62–157 (AAKP…AKPA) and 173–183 (AAKPGAEAPRP). Pro residues-rich tracts occupy residues 184-196 (GGMP…PAPK) and 219-236 (PRPG…PGGG). Gly residues-rich tracts occupy residues 237–249 (PRPQ…GGQR) and 261–277 (GNRG…GPRP). Residues 279 to 303 (GGPRPQGGSRPQGGSAQGAQGAPSQ) are compositionally biased toward low complexity. The span at 330 to 373 (GKGGRGGQAGGGAGGGFNRGGGTGGGAGRGGRRGGTAGAFGRPG) shows a compositional bias: gly residues. Residues 377 to 386 (RRGRKSKRQK) show a composition bias toward basic residues. In terms of domain architecture, tr-type G spans 499–671 (KRPPVVTVMG…VCLTADAELD (173 aa)). Residues 508–515 (GHVDHGKT) are G1. Residue 508 to 515 (GHVDHGKT) participates in GTP binding. Residues 533 to 537 (GITQG) form a G2 region. The tract at residues 558–561 (DTPG) is G3. Residues 558–562 (DTPGH) and 612–615 (NKID) each bind GTP. A G4 region spans residues 612-615 (NKID). Residues 648-650 (SAK) are G5.

It belongs to the TRAFAC class translation factor GTPase superfamily. Classic translation factor GTPase family. IF-2 subfamily.

The protein resides in the cytoplasm. Its function is as follows. One of the essential components for the initiation of protein synthesis. Protects formylmethionyl-tRNA from spontaneous hydrolysis and promotes its binding to the 30S ribosomal subunits. Also involved in the hydrolysis of GTP during the formation of the 70S ribosomal complex. The sequence is that of Translation initiation factor IF-2 from Corynebacterium glutamicum (strain ATCC 13032 / DSM 20300 / JCM 1318 / BCRC 11384 / CCUG 27702 / LMG 3730 / NBRC 12168 / NCIMB 10025 / NRRL B-2784 / 534).